The sequence spans 825 residues: Phenylalanine--tRNA ligase beta subunit (825 aa).

Residues 39–154 form the tRNA-binding domain; that stretch reads RTWADGVVLG…EAHPLGSDVR (116 aa). Residues 411-506 enclose the B5 domain; the sequence is PLERTLKLRL…RLYGYDRFSE (96 aa). Mg(2+) contacts are provided by D484, D490, E493, and E494. The region spanning 731 to 824 is the FDX-ACB domain; that stretch reads SPFPAADRDI…LATQFPVTLR (94 aa).

This sequence belongs to the phenylalanyl-tRNA synthetase beta subunit family. Type 1 subfamily. In terms of assembly, tetramer of two alpha and two beta subunits. It depends on Mg(2+) as a cofactor.

It is found in the cytoplasm. The enzyme catalyses tRNA(Phe) + L-phenylalanine + ATP = L-phenylalanyl-tRNA(Phe) + AMP + diphosphate + H(+). This Synechococcus sp. (strain JA-2-3B'a(2-13)) (Cyanobacteria bacterium Yellowstone B-Prime) protein is Phenylalanine--tRNA ligase beta subunit.